The chain runs to 370 residues: 4-hydroxy-3-methylbut-2-en-1-yl diphosphate synthase (flavodoxin) (370 aa).

The [4Fe-4S] cluster site is built by Cys270, Cys273, Cys305, and Glu312.

This sequence belongs to the IspG family. Requires [4Fe-4S] cluster as cofactor.

It carries out the reaction (2E)-4-hydroxy-3-methylbut-2-enyl diphosphate + oxidized [flavodoxin] + H2O + 2 H(+) = 2-C-methyl-D-erythritol 2,4-cyclic diphosphate + reduced [flavodoxin]. Its pathway is isoprenoid biosynthesis; isopentenyl diphosphate biosynthesis via DXP pathway; isopentenyl diphosphate from 1-deoxy-D-xylulose 5-phosphate: step 5/6. Converts 2C-methyl-D-erythritol 2,4-cyclodiphosphate (ME-2,4cPP) into 1-hydroxy-2-methyl-2-(E)-butenyl 4-diphosphate. This is 4-hydroxy-3-methylbut-2-en-1-yl diphosphate synthase (flavodoxin) from Azotobacter vinelandii (strain DJ / ATCC BAA-1303).